We begin with the raw amino-acid sequence, 515 residues long: Bifunctional purine biosynthesis protein PurH (515 aa).

The MGS-like domain occupies 1 to 145 (MTKRALISVS…KNHASVTVVV (145 aa)).

This sequence belongs to the PurH family.

The enzyme catalyses (6R)-10-formyltetrahydrofolate + 5-amino-1-(5-phospho-beta-D-ribosyl)imidazole-4-carboxamide = 5-formamido-1-(5-phospho-D-ribosyl)imidazole-4-carboxamide + (6S)-5,6,7,8-tetrahydrofolate. The catalysed reaction is IMP + H2O = 5-formamido-1-(5-phospho-D-ribosyl)imidazole-4-carboxamide. It functions in the pathway purine metabolism; IMP biosynthesis via de novo pathway; 5-formamido-1-(5-phospho-D-ribosyl)imidazole-4-carboxamide from 5-amino-1-(5-phospho-D-ribosyl)imidazole-4-carboxamide (10-formyl THF route): step 1/1. Its pathway is purine metabolism; IMP biosynthesis via de novo pathway; IMP from 5-formamido-1-(5-phospho-D-ribosyl)imidazole-4-carboxamide: step 1/1. This chain is Bifunctional purine biosynthesis protein PurH, found in Streptococcus agalactiae serotype III (strain NEM316).